The chain runs to 434 residues: Urokinase-type plasminogen activator (434 aa).

Residues 1–20 (MKLIIFLTVTLCTLVTGLDS) form the signal peptide. An EGF-like domain is found at 36–72 (QHRECQCLNGGTCITYRFFSQIKRCLCPEGYGGLHCE). Intrachain disulfides connect Cys40–Cys48, Cys42–Cys60, Cys62–Cys71, Cys79–Cys158, Cys96–Cys139, Cys128–Cys152, Cys162–Cys296, Cys202–Cys218, Cys210–Cys285, Cys310–Cys379, Cys342–Cys358, and Cys369–Cys397. The Kringle domain occupies 79 to 158 (CYSGNGEDYR…ETPCSTIEKC (80 aa)). Positions 159–172 (ERTCGQRSFSKYFK) are connecting peptide. The 249-residue stretch at 173-421 (IVGGSQAEVE…YLNWIDSNMN (249 aa)) folds into the Peptidase S1 domain. The active-site Charge relay system is His217. An N-linked (GlcNAc...) asparagine glycan is attached at Asn228. The Charge relay system role is filled by Asp272. The active-site Charge relay system is Ser373.

The protein belongs to the peptidase S1 family.

The protein resides in the secreted. The enzyme catalyses Specific cleavage of Arg-|-Val bond in plasminogen to form plasmin.. In terms of biological role, specifically cleaves the zymogen plasminogen to form the active enzyme plasmin. The protein is Urokinase-type plasminogen activator (PLAU) of Gallus gallus (Chicken).